Reading from the N-terminus, the 218-residue chain is Attacin-B (218 aa).

Positions 1-17 (MQKTSILILALFAIAEA) are cleaved as a signal peptide. A propeptide spanning residues 18–28 (VPTTGPIRVRR) is cleaved from the precursor.

It belongs to the attacin/sarcotoxin-2 family. As to expression, hemolymph (at protein level).

It localises to the secreted. Its function is as follows. Hemolymph antibacterial protein. The chain is Attacin-B (AttB) from Drosophila melanogaster (Fruit fly).